The sequence spans 315 residues: 10-epi-cubebol synthase (315 aa).

Asp79, Asn220, Ser224, and Glu228 together coordinate Mg(2+). The DDXXD motif motif lies at 79–83; the sequence is DDVCE. The NXXXSXXXE motif signature appears at 220–228; it reads NDIYSLRKE.

The protein belongs to the terpene synthase family. Requires Mg(2+) as cofactor.

It carries out the reaction (2E,6E)-farnesyl diphosphate + H2O = 10-epi-cubebol + diphosphate. In terms of biological role, catalyzes the cyclization of farnesyl diphosphate (FPP) to 10-epi-cubebol. Is also responsible for the formation of many other sesquiterpenes, mainly cadalanes and cubebanes, including 1,10-di-epi-cubebol and the cadalanes delta-cadinene, T-cadinol and alpha-cadinol. This Sorangium cellulosum (strain So ce56) (Polyangium cellulosum (strain So ce56)) protein is 10-epi-cubebol synthase.